The following is a 400-amino-acid chain: Queuine tRNA-ribosyltransferase catalytic subunit (400 aa).

The Proton acceptor role is filled by Asp-89. Residues 89–93, Asp-143, Gln-185, and Gly-212 contribute to the substrate site; that span reads DSGGF. The RNA binding stretch occupies residues 243–249; the sequence is GVGFPVD. The Nucleophile role is filled by Asp-262. The segment at 267-271 is RNA binding; important for wobble base 34 recognition; that stretch reads TRTAR. Positions 301, 303, 306, and 331 each coordinate Zn(2+).

Belongs to the queuine tRNA-ribosyltransferase family. As to quaternary structure, heterodimer of a catalytic subunit and an accessory subunit. It depends on Zn(2+) as a cofactor.

It localises to the cytoplasm. The catalysed reaction is guanosine(34) in tRNA + queuine = queuosine(34) in tRNA + guanine. Catalytic subunit of the queuine tRNA-ribosyltransferase (TGT) that catalyzes the base-exchange of a guanine (G) residue with queuine (Q) at position 34 (anticodon wobble position) in tRNAs with GU(N) anticodons (tRNA-Asp, -Asn, -His and -Tyr), resulting in the hypermodified nucleoside queuosine (7-(((4,5-cis-dihydroxy-2-cyclopenten-1-yl)amino)methyl)-7-deazaguanosine). Catalysis occurs through a double-displacement mechanism. The nucleophile active site attacks the C1' of nucleotide 34 to detach the guanine base from the RNA, forming a covalent enzyme-RNA intermediate. The proton acceptor active site deprotonates the incoming queuine, allowing a nucleophilic attack on the C1' of the ribose to form the product. This is Queuine tRNA-ribosyltransferase catalytic subunit from Caenorhabditis briggsae.